The following is a 131-amino-acid chain: Cystatin-like cysteine protease inhibitor EPIC3 (131 aa).

An N-terminal signal peptide occupies residues 1-20 (MAFTRSIALFAGLALAASSA). Residue Asn-33 is glycosylated (N-linked (GlcNAc...) asparagine). The short motif at 71–75 (QTVAG) is the Secondary area of contact element.

It belongs to the cystatin family.

It localises to the secreted. Its function is as follows. Secreted effector that interacts with and inhibits host apoplastic pathogenesis-related papain-like cysteine proteases. Inhibition of host proteases by a pathogen extracellular protease inhibitor forms a specific type of defense-counterdefense mechanism between plants and microbial pathogens. The sequence is that of Cystatin-like cysteine protease inhibitor EPIC3 from Phytophthora infestans (Potato late blight agent).